The following is a 124-amino-acid chain: Phycocyanin PC645 alpha-3 subunit (124 aa).

Arginine 71 is a binding site for (2R,3E)-phycocyanobilin. Residues cysteine 73, tyrosine 81, and lysine 97 each coordinate mesobiliverdin.

It belongs to the phycoerythrin family. Heterotetramer of 2 different alpha chains and 2 identical beta chains which form 2 alpha-beta heterodimers within the heterotetramer. Post-translationally, contains one phycocyanobilin chromophore and one mesobiliverdin chromophore with binding mediated by both the alpha and beta subunits.

It is found in the plastid. The protein localises to the chloroplast thylakoid membrane. In terms of biological role, light-harvesting photosynthetic tetrapyrrole chromophore-protein from the phycobiliprotein complex. The protein is Phycocyanin PC645 alpha-3 subunit of Chroomonas sp. (strain CCMP270).